A 437-amino-acid polypeptide reads, in one-letter code: Putrescine hydroxycinnamoyltransferase 3 (437 aa).

Catalysis depends on proton acceptor residues His151 and Asp383.

This sequence belongs to the plant acyltransferase family. Highly expressed in roots. Expressed at low levels in shoots and flowers.

Hydroxycinnamoyl transferase that catalyzes the transfer of an acyl from p-coumaryol-CoA to putrescine, to produce coumaroyl putrescine. Can use feruloyl-CoA and caffeoyl-CoA as acyl donors. This is Putrescine hydroxycinnamoyltransferase 3 from Oryza sativa subsp. japonica (Rice).